The chain runs to 198 residues: Probable minor pilin MMP0709 (198 aa).

A propeptide spanning residues M1 to G5 is cleaved from the precursor. Residues Q6–L14 carry the QXSXEXXXL motif.

In terms of processing, the N-terminus is probably cleaved by the prepilin peptidase EppA, which recognizes the class III signal sequence.

Its subcellular location is the secreted. The protein localises to the cell surface. It localises to the fimbrium. The polypeptide is Probable minor pilin MMP0709 (Methanococcus maripaludis (strain DSM 14266 / JCM 13030 / NBRC 101832 / S2 / LL)).